The sequence spans 305 residues: MHYSVLLQESINDLNINPQGIYIDATFGRGGHSKAILNRLTTGRLIAFDKDLDAISYARENFQFSNFEIVHASFASIYDYCLQHSLLGKIDGIIMDLGVSSPQLDNAARGFSFTHNGPLDMRMDVSKGITASQALEELSVDDLSYIFKVYGEERFARKIALRIKDYIQQNGSISTTLELAELIRATIGKKEKKNPATRCFQALRIYVNNELKDLEALLENILAVIKSGGRIAAISFHSLEDRIVKQKFSALINPKQELNRITKMLPQDSSQIKLKWITKKSKANEDELNQNVRSRSAILRVVEKL.

S-adenosyl-L-methionine is bound by residues 30–32, D49, F74, D96, and Q103; that span reads GGH.

It belongs to the methyltransferase superfamily. RsmH family.

It is found in the cytoplasm. It catalyses the reaction cytidine(1402) in 16S rRNA + S-adenosyl-L-methionine = N(4)-methylcytidine(1402) in 16S rRNA + S-adenosyl-L-homocysteine + H(+). In terms of biological role, specifically methylates the N4 position of cytidine in position 1402 (C1402) of 16S rRNA. This Francisella tularensis subsp. novicida (strain U112) protein is Ribosomal RNA small subunit methyltransferase H.